The chain runs to 375 residues: Probable Na(+)/H(+) antiporter GerT (375 aa).

Transmembrane regions (helical) follow at residues 27–47 (PSVL…LGII), 89–109 (AGGI…FGLI), 112–132 (HAIF…VQTL), 145–165 (TILG…AFVM), 183–203 (IIFF…IMKM), 204–224 (LVPL…CFSF), 226–246 (YYSE…GIAI), 261–281 (PIAY…EITF), 288–308 (LWFI…GSGL), and 350–370 (ENFT…PPLL).

Belongs to the monovalent cation:proton antiporter 2 (CPA2) transporter (TC 2.A.37) family.

Its subcellular location is the membrane. In terms of biological role, contributes to the success of spore outgrowth from the germinated state during alkaline or Na(+) stress. Does not have a significant role in germination. In Bacillus cereus, this protein is Probable Na(+)/H(+) antiporter GerT (gerT).